The primary structure comprises 481 residues: Subtilisin-like protease 1 (481 aa).

The signal sequence occupies residues 1 to 19 (MGVFRFISISLAAVSAANA). A propeptide spanning residues 20-116 (AQILSMPHAQ…VEPDTIISVH (97 aa)) is cleaved from the precursor. An Inhibitor I9 domain is found at 34–115 (SYIVMMKDDT…FVEPDTIISV (82 aa)). Residues 126–400 (SWGLARISSS…NVLINNGGAK (275 aa)) enclose the Peptidase S8 domain. Active-site charge relay system residues include aspartate 158 and histidine 190. The segment at 175-198 (GSNQVNDGDDNDRSGHGTHTSGTM) is disordered. An N-linked (GlcNAc...) asparagine glycan is attached at asparagine 251. The disordered stretch occupies residues 281–312 (GNDNTDARSSSPASEPSVCTVGASAEDDSRSS). Polar residues predominate over residues 282–294 (NDNTDARSSSPAS). Serine 345 functions as the Charge relay system in the catalytic mechanism. A disordered region spans residues 379–455 (ASISDVGPGT…HPHTPFPGGD (77 aa)). Residues 424-450 (PQQPAPGEPSTPAPAPMPPTPQHPHTP) show a composition bias toward pro residues.

It belongs to the peptidase S8 family.

Its subcellular location is the secreted. Functionally, secreted subtilisin-like serine protease with keratinolytic activity that contributes to pathogenicity. The protein is Subtilisin-like protease 1 (SUB1) of Arthroderma gypseum (strain ATCC MYA-4604 / CBS 118893) (Microsporum gypseum).